We begin with the raw amino-acid sequence, 438 residues long: Tol-Pal system protein TolB (438 aa).

The first 21 residues, 1–21 (MVKRSLLVLALLICLPATLFA), serve as a signal peptide directing secretion.

It belongs to the TolB family. The Tol-Pal system is composed of five core proteins: the inner membrane proteins TolA, TolQ and TolR, the periplasmic protein TolB and the outer membrane protein Pal. They form a network linking the inner and outer membranes and the peptidoglycan layer.

Its subcellular location is the periplasm. In terms of biological role, part of the Tol-Pal system, which plays a role in outer membrane invagination during cell division and is important for maintaining outer membrane integrity. The protein is Tol-Pal system protein TolB of Desulfosudis oleivorans (strain DSM 6200 / JCM 39069 / Hxd3) (Desulfococcus oleovorans).